The sequence spans 246 residues: 14-3-3 protein beta/alpha (246 aa).

M1 is subject to N-acetylmethionine. T2 carries the post-translational modification N-acetylthreonine; in 14-3-3 protein beta/alpha, N-terminally processed. A Phosphothreonine modification is found at T2. K5 bears the N6-acetyllysine mark. K51 carries the post-translational modification N6-acetyllysine; alternate. A Glycyl lysine isopeptide (Lys-Gly) (interchain with G-Cter in SUMO2); alternate cross-link involves residue K51. The residue at position 60 (S60) is a Phosphoserine. K70 carries the post-translational modification N6-acetyllysine. 3'-nitrotyrosine is present on residues Y84 and Y106. Residue K117 is modified to N6-acetyllysine. Phosphoserine is present on residues S186 and S232.

It belongs to the 14-3-3 family. As to quaternary structure, homodimer. Interacts with SAMSN1 and PRKCE. Interacts with AKAP13. Interacts with SSH1 and TORC2/CRTC2. Interacts with ABL1; the interaction results in cytoplasmic location of ABL1 and inhibition of cABL-mediated apoptosis. Interacts with ROR2 (dimer); the interaction results in phosphorylation of YWHAB on tyrosine residues. Interacts with GAB2. Interacts with YAP1 (phosphorylated form). Interacts with the phosphorylated (by AKT1) form of SRPK2. Interacts with PKA-phosphorylated AANAT. Interacts with MYO1C. Interacts with SIRT2. Interacts with the 'Thr-369' phosphorylated form of DAPK2. Interacts with PI4KB, TBC1D22A and TBC1D22B. Interacts with the 'Ser-1134' and 'Ser-1161' phosphorylated form of SOS1. Interacts (via phosphorylated form) with YWHAB; this interaction occurs in a protein kinase AKT1-dependent manner. Interacts with SLITRK1. Interacts with SYNPO2 (phosphorylated form); YWHAB competes with ACTN2 for interaction with SYNPO2. Interacts with RIPOR2 (via phosphorylated form); this interaction occurs in a chemokine-dependent manner and does not compete for binding of RIPOR2 with RHOA nor blocks inhibition of RIPOR2-mediated RHOA activity. Interacts with MARK2 and MARK3. Interacts with TESK1; the interaction is dependent on the phosphorylation of TESK1 'Ser-439' and inhibits TESK1 kinase activity. Interacts with MEFV. Interacts with HDAC4. Interacts with ADAM22 (via C-terminus). Post-translationally, isoform alpha differs from isoform beta in being phosphorylated. Phosphorylated on Ser-60 by protein kinase C delta type catalytic subunit in a sphingosine-dependent fashion. Isoform Short contains a N-acetylmethionine at position 1.

It is found in the cytoplasm. The protein localises to the melanosome. Functionally, adapter protein implicated in the regulation of a large spectrum of both general and specialized signaling pathways. Binds to a large number of partners, usually by recognition of a phosphoserine or phosphothreonine motif. Binding generally results in the modulation of the activity of the binding partner. Negative regulator of osteogenesis. Blocks the nuclear translocation of the phosphorylated form (by AKT1) of SRPK2 and antagonizes its stimulatory effect on cyclin D1 expression resulting in blockage of neuronal apoptosis elicited by SRPK2. Negative regulator of signaling cascades that mediate activation of MAP kinases via AKAP13. The chain is 14-3-3 protein beta/alpha (Ywhab) from Mus musculus (Mouse).